A 902-amino-acid polypeptide reads, in one-letter code: MWIPSKLTRPGRLHNAIVRPRVLDLLQQAPYYKLVLFRSPAGYGKTTMAAQWLSDKPNVGWYSIDDSDNDGFRFVNYLLQALNKATNYNCSNAQKLAEKRQFSSLRSLFSEVFAEMADFQHECYVVLDDYHLITNDEIHESMRFFLKHMPDNLTVVVTSRAAPPLGTANLRVRDLMIEIGNEMLAFDTEETTRFFNQRIADGIDEDMANNLRTYVEGWPSALQLIALQAQHQNRTLAQTVESVSQFNHAHLWDYLVEEVFDLLDQETRHFLMQVSVLDHFNDELVFALTQREDALGMIESLNRFGLFIYPLEGEQNWFRFHNLFGEFLSHERLARIPQQEKDLHRNAAVAWLKQKAPHQAIHHAQKSNDTDLIVEILNEFGWKMFNQGELTTLESAINQLDKDLLFSHPKLSMLRAWLAQSQHRYNQVGKLLAEAEEEHKKRNIEIDSGYQGQANALLAQVAINSNQPEHALELAELALSQLDPTVYRSRIVATSVVGEVNHVLGKLDRALPMMQQTEKLARQYQVYHQALWAILQQSEIMIAQGYVQAAFELQDSGFRLIEEQQLQHVPLHEFLLRIRAQVLWCWNRLDEAEECAYKGLQILENHSPSKHLHSYSMLARIAIGRGELDKAGKFIEHIQHLMKQSTYHVDWTANASLSLILFWQARGNTEAIQEWLNTAVRPESACNHFQQLQWRNIARAHINLGQYDEAREALDFLQSEAHRTNLVTDTNRNLVVEAILAARQKDEEQAKTLLKEALVMTNQTGMVGNFLTDGATIGGLLEKLSLRHELGDLERHRAQQLMKDISSNQRSRSIHFDEDFIEKLVNHPNVPELVRTSPLTQREWQVLGLIYSGFSNEQIAQELDVAGTTIKTHIRNLYQKLNIANRKEAIVTAENLLQLMGY.

39–46 (SPAGYGKT) contacts ATP. An HTH luxR-type domain is found at 832–897 (ELVRTSPLTQ…EAIVTAENLL (66 aa)). Positions 856-875 (NEQIAQELDVAGTTIKTHIR) form a DNA-binding region, H-T-H motif.

This sequence belongs to the MalT family. Monomer in solution. Oligomerizes to an active state in the presence of the positive effectors ATP and maltotriose.

Activated by ATP and maltotriose, which are both required for DNA binding. Functionally, positively regulates the transcription of the maltose regulon whose gene products are responsible for uptake and catabolism of malto-oligosaccharides. Specifically binds to the promoter region of its target genes, recognizing a short DNA motif called the MalT box. In Vibrio campbellii (strain ATCC BAA-1116), this protein is HTH-type transcriptional regulator MalT.